A 98-amino-acid polypeptide reads, in one-letter code: Putative defensin-like protein 239 (98 aa).

An N-terminal signal peptide occupies residues 1–23 (MRYTTSFIGLCFLIFLLKNLVNG). 4 disulfides stabilise this stretch: cysteine 29–cysteine 89, cysteine 39–cysteine 69, cysteine 47–cysteine 86, and cysteine 67–cysteine 88.

The protein belongs to the DEFL family.

It localises to the secreted. In Arabidopsis thaliana (Mouse-ear cress), this protein is Putative defensin-like protein 239 (SCRL17).